An 88-amino-acid chain; its full sequence is UPF0297 protein STER_1937 (88 aa).

It belongs to the UPF0297 family.

The sequence is that of UPF0297 protein STER_1937 from Streptococcus thermophilus (strain ATCC BAA-491 / LMD-9).